The following is a 339-amino-acid chain: MSTVHEILCKLSLEGDHSTPASAYGSVKAYTNFDAERDALNIETAIKTKGVDEVTIVNILTNRSNEQRQDIAFAYQRRTKKELASALKSALSGHLETVILGLLKTPAQYDASELKASMKGLGTDEDSLIEIICSRTNQELQEINRVYKEMYKTDLEKDIISDTSGDFRKLMVALAKGRRAEDGSVIDYELIDQDARDLYDAGVKRKGTDVPKWISIMTERSVCHLQKVFERYKSYSPYDMLESIKKEVKGDLENAFLNLVQCIQNKPLYFADRLYDSMKGKGTRDKVLIXIMVSRSEVDMLKIRSEFKRKYGKSLYNYIQQDTKGDYQKALLYLCGGDD.

Ser-2 is modified (N-acetylserine). An S100A10-binding site region spans residues 2 to 24 (STVHEILCKLSLEGDHSTPASAY). A Phosphotyrosine; by SRC modification is found at Tyr-24. Ser-26 carries the post-translational modification Phosphoserine; by PKC. Annexin repeat units lie at residues 33–104 (FDAE…GLLK) and 105–176 (TPAQ…ALAK). At Lys-49 the chain carries N6-acetyllysine; alternate. A Glycyl lysine isopeptide (Lys-Gly) (interchain with G-Cter in SUMO1); alternate cross-link involves residue Lys-49. Lys-49 is covalently cross-linked (Glycyl lysine isopeptide (Lys-Gly) (interchain with G-Cter in SUMO2); alternate). Lys-152 bears the N6-acetyllysine mark. A Phosphoserine modification is found at Ser-184. 2 Annexin repeats span residues 189 to 261 (ELID…NLVQ) and 265 to 336 (NKPL…YLCG). Tyr-199 carries the phosphotyrosine modification. Residue Lys-227 is modified to N6-acetyllysine.

This sequence belongs to the annexin family. In terms of assembly, heterotetramer containing 2 light chains of S100A10/p11 and 2 heavy chains of ANXA2/p36. Interacts with ATP1B1. Interacts with DYSF. Interacts with COCH. Interacts (via repeat Annexin 1) with PCSK9 (via the C-terminal domain); the interaction inhibits the degradation of LDLR. Interacts with CEACAM1 (via the cytoplasmic domain); this interaction is regulated by phosphorylation of CEACAM1. Interacts with APPL2 and APPL1; targets APPL2 to endosomes and acting in parallel to RAB5A. Interacts with S100A4. May interact with UBAP2. Interacts with PLEKHG4B; this interaction is required for PLEKHG4B localization to cell-cell adhesions. As to quaternary structure, (Microbial infection) Interacts with classical swine fever virus envelope glycoprotein E2. In terms of processing, ISGylated.

The protein resides in the secreted. It localises to the extracellular space. It is found in the extracellular matrix. The protein localises to the basement membrane. Its subcellular location is the melanosome. In terms of biological role, calcium-regulated membrane-binding protein whose affinity for calcium is greatly enhanced by anionic phospholipids. It binds two calcium ions with high affinity. May be involved in heat-stress response. Inhibits PCSK9-enhanced LDLR degradation, probably reduces PCSK9 protein levels via a translational mechanism but also competes with LDLR for binding with PCSK9. Binds to endosomes damaged by phagocytosis of particulate wear debris and participates in endosomal membrane stabilization, thereby limiting NLRP3 inflammasome activation. Required for endothelial cell surface plasmin generation and may support fibrinolytic surveillance and neoangiogenesis. Functionally, (Microbial infection) May serve as a receptor for classical swine fever virus (CSFV). Promotes CSFV infection. The polypeptide is Annexin A2 (ANXA2) (Sus scrofa (Pig)).